We begin with the raw amino-acid sequence, 731 residues long: E3 ubiquitin-protein ligase SMURF1 (731 aa).

The region spanning 1 to 120 is the C2 domain; it reads MSNPGTRRNG…TGYQRLDLCK (120 aa). Phosphoserine is present on Ser-200. The tract at residues 216–237 is disordered; that stretch reads EVRGPLQTPQNRPHGHQSPELP. 2 WW domains span residues 234-267 and 280-313; these read PELP…DPRI and GPLP…DPRL. Glycyl lysine isopeptide (Lys-Gly) (interchain with G-Cter in ubiquitin) cross-links involve residues Lys-355 and Lys-357. In terms of domain architecture, HECT spans 394-731; that stretch reads RPKDLKKRLM…VEETCGFAVE (338 aa). Cys-699 acts as the Glycyl thioester intermediate in catalysis.

As to quaternary structure, interacts with TRAF4. Interacts (via HECT domain) with FBXL15 (via LRR repeats). Interacts with SMAD7 and TGFBR1; SMAD7 recruits SMURF1 to TGFBR1 and regulates TGF-beta receptor degradation. Interacts with MAVS; the interaction is mediated by NDFIP1. Post-translationally, auto-ubiquitinated in presence of NDFIP1. Ubiquitinated by the SCF(FBXL15) complex at Lys-355 and Lys-357, leading to its degradation by the proteasome. Lys-357 is the primary ubiquitination site.

The protein localises to the cytoplasm. It localises to the cell membrane. It carries out the reaction S-ubiquitinyl-[E2 ubiquitin-conjugating enzyme]-L-cysteine + [acceptor protein]-L-lysine = [E2 ubiquitin-conjugating enzyme]-L-cysteine + N(6)-ubiquitinyl-[acceptor protein]-L-lysine.. Its pathway is protein modification; protein ubiquitination. Its function is as follows. E3 ubiquitin-protein ligase that acts as a negative regulator of BMP signaling pathway. Mediates ubiquitination and degradation of SMAD1 and SMAD5, 2 receptor-regulated SMADs specific for the BMP pathway. Promotes ubiquitination and subsequent proteasomal degradation of TRAF family members and RHOA. Promotes ubiquitination and subsequent proteasomal degradation of MAVS. Acts as an antagonist of TGF-beta signaling by ubiquitinating TGFBR1 and targeting it for degradation. Plays a role in dendrite formation by melanocytes. This is E3 ubiquitin-protein ligase SMURF1 (Smurf1) from Mus musculus (Mouse).